The primary structure comprises 146 residues: D-aminoacyl-tRNA deacylase (146 aa).

Positions 137–138 (GP) match the Gly-cisPro motif, important for rejection of L-amino acids motif.

Belongs to the DTD family. As to quaternary structure, homodimer.

It localises to the cytoplasm. It carries out the reaction glycyl-tRNA(Ala) + H2O = tRNA(Ala) + glycine + H(+). It catalyses the reaction a D-aminoacyl-tRNA + H2O = a tRNA + a D-alpha-amino acid + H(+). An aminoacyl-tRNA editing enzyme that deacylates mischarged D-aminoacyl-tRNAs. Also deacylates mischarged glycyl-tRNA(Ala), protecting cells against glycine mischarging by AlaRS. Acts via tRNA-based rather than protein-based catalysis; rejects L-amino acids rather than detecting D-amino acids in the active site. By recycling D-aminoacyl-tRNA to D-amino acids and free tRNA molecules, this enzyme counteracts the toxicity associated with the formation of D-aminoacyl-tRNA entities in vivo and helps enforce protein L-homochirality. The chain is D-aminoacyl-tRNA deacylase from Bacillus cereus (strain G9842).